The sequence spans 249 residues: Vesicle-associated membrane protein-associated protein A (249 aa).

Position 2 is an N-acetylalanine (alanine 2). The Cytoplasmic portion of the chain corresponds to 2–227; that stretch reads ASASGAMAKH…VSFRDNVTSP (226 aa). An MSP domain is found at 14–131; it reads ILVLDPPSDL…MDSKLRCVFE (118 aa). Residues 50 to 53 are phosphorylated FFAT motif binding; sequence KVKT. Lysine 125 is subject to N6-acetyllysine. Over residues 135 to 144 the composition is skewed to basic and acidic residues; the sequence is ENDKLNDMEP. Residues 135–166 form a disordered region; sequence ENDKLNDMEPSKAVPLNASKQDGPLPKPHSVS. Position 166 is a phosphoserine (serine 166). Residues 168 to 207 adopt a coiled-coil conformation; sequence NDTETRKLMEECKRLQGEMMKLSEENRHLRDEGLRLRKVA. Position 170 is a phosphothreonine (threonine 170). Serine 214, serine 216, and serine 219 each carry phosphoserine. Residues 228-248 traverse the membrane as a helical; Anchor for type IV membrane protein segment; that stretch reads LPSLLVVIAAIFIGFFLGKFI.

Belongs to the VAMP-associated protein (VAP) (TC 9.B.17) family. Homodimer; disulfide-linked. Heterodimer with VAPB. Interacts with VAMP1, VAMP2, STX1A, BET1, SEC22C and with the C-terminal domain of OCLN. Interacts (via MSP domain) with OSBPL1A (via FFAT motif). Interacts (via MSP domain) with ZFYVE27; may retain ZFYVE27 in the endoplasmic reticulum and regulate its function in cell projections formation. Interacts with OSBP. Interacts (via C-terminus) with RSAD2/viperin (via C-terminus). Interacts with IFITM3. Interacts with OSBPL3 (phosphorylated form). Interacts with KIF5A in a ZFYVE27-dependent manner. Interacts (via MSP domain) with STARD3 (via phosphorylated FFAT motif); this interaction recruits VAPA to the endosome. Interacts with STARD3NL (via FFAT motif). Interacts with CERT1. Interacts with PLEKHA3 and SACM1L to form a ternary complex. Interacts with VPS13A (via FFAT motif). Interacts with RB1CC1 (via phosphorylated FFAT motif), MIGA2 (via phosphorylated FFAT motif), RMDN3 (via phosphorylated FFAT motif), KCNB1 (via phosphorylated FFAT motif) and KCNB2 (via phosphorylated FFAT motif). Interacts (via MSP domain) with WDR44; the interactions connect the endoplasmic reticulum (ER) with the endosomal tubule. As to expression, ubiquitous.

The protein resides in the endoplasmic reticulum membrane. It localises to the cell membrane. The protein localises to the cell junction. Its subcellular location is the tight junction. It is found in the nucleus membrane. Endoplasmic reticulum (ER)-anchored protein that mediates the formation of contact sites between the ER and endosomes via interaction with FFAT motif-containing proteins such as STARD3 or WDR44. STARD3-VAPA interaction enables cholesterol transfer from the ER to endosomes. Via interaction with WDR44 participates in neosynthesized protein export. In addition, recruited to the plasma membrane through OSBPL3 binding. The OSBPL3-VAPA complex stimulates RRAS signaling which in turn attenuates integrin beta-1 (ITGB1) activation at the cell surface. With OSBPL3, may regulate ER morphology. May play a role in vesicle trafficking. The protein is Vesicle-associated membrane protein-associated protein A of Rattus norvegicus (Rat).